A 230-amino-acid chain; its full sequence is Ribonuclease 3 (230 aa).

The region spanning 6–135 (VSELRARYGI…FNGALFLDQG (130 aa)) is the RNase III domain. E48 lines the Mg(2+) pocket. D52 is a catalytic residue. Mg(2+)-binding residues include D121 and E124. Residue E124 is part of the active site. The DRBM domain maps to 161-230 (DYKTNLQEFL…AKKALEQLKA (70 aa)).

Belongs to the ribonuclease III family. As to quaternary structure, homodimer. The cofactor is Mg(2+).

It localises to the cytoplasm. It carries out the reaction Endonucleolytic cleavage to 5'-phosphomonoester.. Its function is as follows. Digests double-stranded RNA. Involved in the processing of primary rRNA transcript to yield the immediate precursors to the large and small rRNAs (23S and 16S). Processes some mRNAs, and tRNAs when they are encoded in the rRNA operon. Processes pre-crRNA and tracrRNA of type II CRISPR loci if present in the organism. The sequence is that of Ribonuclease 3 from Latilactobacillus sakei subsp. sakei (strain 23K) (Lactobacillus sakei subsp. sakei).